Here is a 102-residue protein sequence, read N- to C-terminus: Small ribosomal subunit protein bS6 (102 aa).

It belongs to the bacterial ribosomal protein bS6 family.

Binds together with bS18 to 16S ribosomal RNA. In Desulfovibrio desulfuricans (strain ATCC 27774 / DSM 6949 / MB), this protein is Small ribosomal subunit protein bS6.